The following is a 217-amino-acid chain: Uracil-DNA glycosylase (217 aa).

D62 (proton acceptor) is an active-site residue.

Belongs to the uracil-DNA glycosylase (UDG) superfamily. UNG family.

It is found in the cytoplasm. It carries out the reaction Hydrolyzes single-stranded DNA or mismatched double-stranded DNA and polynucleotides, releasing free uracil.. Functionally, excises uracil residues from the DNA which can arise as a result of misincorporation of dUMP residues by DNA polymerase or due to deamination of cytosine. The chain is Uracil-DNA glycosylase from Streptococcus mutans serotype c (strain ATCC 700610 / UA159).